Here is an 886-residue protein sequence, read N- to C-terminus: DNA mismatch repair protein MutS (886 aa).

641-648 (GPNMAGKS) contributes to the ATP binding site.

This sequence belongs to the DNA mismatch repair MutS family.

Functionally, this protein is involved in the repair of mismatches in DNA. It is possible that it carries out the mismatch recognition step. This protein has a weak ATPase activity. The polypeptide is DNA mismatch repair protein MutS (Rickettsia rickettsii (strain Sheila Smith)).